A 134-amino-acid chain; its full sequence is Agouti-related protein (134 aa).

The signal sequence occupies residues 1–20 (MLTAVLLSCALLLAMPPLQG). The propeptide occupies 21 to 84 (AQMGPAPLEG…VLDPEGRKPR (64 aa)). Cystine bridges form between Cys89/Cys104, Cys96/Cys110, Cys103/Cys121, Cys107/Cys131, and Cys112/Cys119. An Agouti domain is found at 89–131 (CVRLHESCLGHQVPCCDPCATCYCRFFNAFCYCRKLGTTTNPC). The segment at 113–115 (RFF) is interaction with melanocortin receptors.

As to quaternary structure, interacts with melanocortin receptors MC3R, MC4R and MC5R.

The protein resides in the secreted. It is found in the golgi apparatus lumen. Its function is as follows. Plays a role in weight homeostasis. Involved in the control of feeding behavior through the central melanocortin system. Acts as alpha melanocyte-stimulating hormone antagonist by inhibiting cAMP production mediated by stimulation of melanocortin receptors within the hypothalamus and adrenal gland. Has very low activity with MC5R. Is an inverse agonist for MC3R and MC4R being able to suppress their constitutive activity. It promotes MC3R and MC4R endocytosis in an arrestin-dependent manner. The chain is Agouti-related protein (AGRP) from Bos taurus (Bovine).